Consider the following 268-residue polypeptide: NH(3)-dependent NAD(+) synthetase (268 aa).

An ATP-binding site is contributed by 46–53 (GVSGGQDS). Aspartate 52 is a binding site for Mg(2+). Arginine 140 contacts deamido-NAD(+). Threonine 160 lines the ATP pocket. Glutamate 165 provides a ligand contact to Mg(2+). Lysine 173 and aspartate 180 together coordinate deamido-NAD(+). An ATP-binding site is contributed by lysine 189. 260–261 (HK) is a deamido-NAD(+) binding site.

It belongs to the NAD synthetase family. As to quaternary structure, homodimer.

The enzyme catalyses deamido-NAD(+) + NH4(+) + ATP = AMP + diphosphate + NAD(+) + H(+). It participates in cofactor biosynthesis; NAD(+) biosynthesis; NAD(+) from deamido-NAD(+) (ammonia route): step 1/1. In terms of biological role, catalyzes the ATP-dependent amidation of deamido-NAD to form NAD. Uses ammonia as a nitrogen source. The polypeptide is NH(3)-dependent NAD(+) synthetase (Buchnera aphidicola subsp. Acyrthosiphon pisum (strain APS) (Acyrthosiphon pisum symbiotic bacterium)).